We begin with the raw amino-acid sequence, 256 residues long: Putative bidirectional sugar transporter SWEET7e (256 aa).

The Extracellular segment spans residues 1–9 (MVSPDLIRN). Residues 10 to 30 (VVGIVGNAISFGLFLSPVLTF) form a helical membrane-spanning segment. In terms of domain architecture, MtN3/slv 1 spans 10–97 (VVGIVGNAIS…TIFFLFSNKK (88 aa)). The Cytoplasmic portion of the chain corresponds to 31–45 (WRIIKEKDMKYFKAD). Residues 46–66 (PYLATLLNCMLWVFYGLPIVH) traverse the membrane as a helical segment. Residues 67 to 69 (PNS) lie on the Extracellular side of the membrane. Residues 70 to 90 (ILVVTINGIGLVIEAVYLTIF) traverse the membrane as a helical segment. The Cytoplasmic segment spans residues 91–100 (FLFSNKKNKK). The helical transmembrane segment at 101 to 121 (MGVVLATEALFMAAVALGVLL) threads the bilayer. Residues 122-130 (GAHTHQRRS) are Extracellular-facing. A helical transmembrane segment spans residues 131 to 151 (LIVGILCVIFGTIMYSSPLTI). The 80-residue stretch at 133 to 212 (VGILCVIFGT…LMQLILDKNQ (80 aa)) folds into the MtN3/slv 2 domain. Over 152–164 (MSQVVKTKSVEYM) the chain is Cytoplasmic. Residues 165-185 (PLLLSVVSFLNGLCWTSYALI) traverse the membrane as a helical segment. R186 is a topological domain (extracellular). Residues 187–207 (FDIFITIPNGLGVLFTLMQLI) traverse the membrane as a helical segment. Residues 208 to 256 (LDKNQDKNLELPTVAPVAKETSIVTPVSKDDDINGSTASHVIINITKEP) are Cytoplasmic-facing.

This sequence belongs to the SWEET sugar transporter family. As to quaternary structure, forms homooligomers and/or heterooligomers.

It is found in the cell membrane. Mediates both low-affinity uptake and efflux of sugar across the plasma membrane. The protein is Putative bidirectional sugar transporter SWEET7e (SWEET7E) of Oryza sativa subsp. japonica (Rice).